The sequence spans 507 residues: Histidine ammonia-lyase (507 aa).

The 5-imidazolinone (Ala-Gly) cross-link spans 141-143 (ASG). The residue at position 142 (S142) is a 2,3-didehydroalanine (Ser).

It belongs to the PAL/histidase family. Post-translationally, contains an active site 4-methylidene-imidazol-5-one (MIO), which is formed autocatalytically by cyclization and dehydration of residues Ala-Ser-Gly.

It localises to the cytoplasm. It carries out the reaction L-histidine = trans-urocanate + NH4(+). It functions in the pathway amino-acid degradation; L-histidine degradation into L-glutamate; N-formimidoyl-L-glutamate from L-histidine: step 1/3. This Burkholderia ambifaria (strain MC40-6) protein is Histidine ammonia-lyase.